We begin with the raw amino-acid sequence, 60 residues long: Large ribosomal subunit protein uL30 (60 aa).

This sequence belongs to the universal ribosomal protein uL30 family. As to quaternary structure, part of the 50S ribosomal subunit.

The sequence is that of Large ribosomal subunit protein uL30 from Desulfitobacterium hafniense (strain DSM 10664 / DCB-2).